The chain runs to 247 residues: MSALLIATNRYFDNHFERPGVKLLPNEFYTTAEDMVLMTVLGSCVAACLHDPYAGIGGMNHFMLPDDGADPGAAASESMRYGAYAMEVLINELIKAGGRRERFEAKVFGGAAVLAGMTTINIGDRNADFVRRYLALERIRITAEDLQGVHPRKVAFMPHSGRAMVKKLRLQVPGVTEREAALAREADRLRAARTRAQVELFAAKRPAAPQPARPRIELFGGRGTAPGAGSPSAGSPYAANLSRKQEA.

The interval 204–247 (KRPAAPQPARPRIELFGGRGTAPGAGSPSAGSPYAANLSRKQEA) is disordered. A compositionally biased stretch (low complexity) spans 227 to 239 (GAGSPSAGSPYAA).

The protein belongs to the CheD family.

It catalyses the reaction L-glutaminyl-[protein] + H2O = L-glutamyl-[protein] + NH4(+). Functionally, probably deamidates glutamine residues to glutamate on methyl-accepting chemotaxis receptors (MCPs), playing an important role in chemotaxis. This Burkholderia orbicola (strain AU 1054) protein is Probable chemoreceptor glutamine deamidase CheD.